The primary structure comprises 229 residues: Transmembrane emp24 domain-containing protein 5 (229 aa).

Residues 1–27 (MGVRMWLPFPMLLLSALPATLLSGAAG) form the signal peptide. Residues 28-196 (FTPSLDSDFT…IQESNFDRVN (169 aa)) lie on the Lumenal side of the membrane. The 82-residue stretch at 45 to 126 (KECFYQPMPL…EKVIFFELIL (82 aa)) folds into the GOLD domain. A helical transmembrane segment spans residues 197 to 217 (FWSVVNLMVMVVVSAIQVYTL). Residues 218–229 (KSLFEDKRKSRT) lie on the Cytoplasmic side of the membrane.

Belongs to the EMP24/GP25L family. As to quaternary structure, interacts with TMED9 and TMED10.

The protein resides in the endoplasmic reticulum membrane. The protein localises to the golgi apparatus. It is found in the cis-Golgi network membrane. It localises to the endoplasmic reticulum-Golgi intermediate compartment membrane. Its function is as follows. Potential role in vesicular protein trafficking, mainly in the early secretory pathway. Required for the maintenance of the Golgi apparatus; involved in protein exchange between Golgi stacks during assembly. Probably not required for COPI-vesicle-mediated retrograde transport. The sequence is that of Transmembrane emp24 domain-containing protein 5 (Tmed5) from Rattus norvegicus (Rat).